A 444-amino-acid polypeptide reads, in one-letter code: MTDALPVREETIFAPASGFGRAAVAVVRVSGPAAGPALDQLAGGRPEPRRLSLRRLRDPGTGNILDQALVAWLPGPATATGEDMAELHLHGGLAVRAAVLRALGRVPGCRPAEAGAFSRRAFLNGRIDLTEAEGIADLIDAETEAQRVQALRQLDGALGRQVAAWRETGIELLAGAEAALDFADEGDVDEDGLDAALAGRAAALRDAIRAALADGRRGERLREGFCVVLAGAPNAGKSTLLNALSGRDAAIVSDIPGTTRDAIEVRCDLGGLPVVLVDTAGLRETADVIEAEGVRRTHHRIRSADLVLHLVPADGEAGPEDFAEVPVLRVRTKSDLPSGAPGEGGLAVSAVTGAGLDALLDAIQGSAASALGGGDALVTRERHREALSRAAGHLDRVATAPAGFPPELVAEDLRLAVRALGEVGGHVGVEEMLDRLFAGFCIGK.

Arg28, Glu86, and Arg126 together coordinate (6S)-5-formyl-5,6,7,8-tetrahydrofolate. Positions 224 to 368 (GFCVVLAGAP…LLDAIQGSAA (145 aa)) constitute a TrmE-type G domain. Asn234 is a K(+) binding site. Residues 234-239 (NAGKST), 253-259 (SDIPGTT), and 278-281 (DTAG) each bind GTP. Ser238 provides a ligand contact to Mg(2+). K(+) contacts are provided by Ser253, Ile255, and Thr258. Thr259 contacts Mg(2+). Lys444 is a (6S)-5-formyl-5,6,7,8-tetrahydrofolate binding site.

This sequence belongs to the TRAFAC class TrmE-Era-EngA-EngB-Septin-like GTPase superfamily. TrmE GTPase family. Homodimer. Heterotetramer of two MnmE and two MnmG subunits. The cofactor is K(+).

The protein localises to the cytoplasm. In terms of biological role, exhibits a very high intrinsic GTPase hydrolysis rate. Involved in the addition of a carboxymethylaminomethyl (cmnm) group at the wobble position (U34) of certain tRNAs, forming tRNA-cmnm(5)s(2)U34. In Methylorubrum populi (strain ATCC BAA-705 / NCIMB 13946 / BJ001) (Methylobacterium populi), this protein is tRNA modification GTPase MnmE.